The following is a 166-amino-acid chain: MSEPTSRRPAYARLLDRAVRILAVRDHSEQELRRKLSAPVMGKNGPEEIDATADDYERVIAWCHEHHYLDDERFVMRFIASRSRKGYGPARIRQELNQKGISRESTEKAMRECEIDWSEMAREQAVRKYGEPLPSNFSEKVKVQRFLLYRGYLMDDIQQIWRNFAD.

This sequence belongs to the RecX family.

The protein localises to the cytoplasm. Functionally, modulates RecA activity. This chain is Regulatory protein RecX, found in Salmonella agona (strain SL483).